Here is a 397-residue protein sequence, read N- to C-terminus: ATP-dependent RNA helicase eIF4A (397 aa).

The short motif at 23 to 51 (YTFDDLNLKPNIVRGIFGYGYESPSAIQQ) is the Q motif element. The 171-residue stretch at 54–224 (ILPITEGRDV…TKFMNNPVRI (171 aa)) folds into the Helicase ATP-binding domain. 67 to 74 (AQSGTGKT) contacts ATP. The short motif at 172–175 (DEAD) is the DEAD box element. The region spanning 235-396 (GIKQFYINVE…EMPADIGALF (162 aa)) is the Helicase C-terminal domain.

Belongs to the DEAD box helicase family. eIF4A subfamily. Component of the eIF4F complex, which composition varies with external and internal environmental conditions. It is composed of at least eIF4A, eIF4E and eIF4G.

It localises to the cytoplasm. It carries out the reaction ATP + H2O = ADP + phosphate + H(+). Functionally, ATP-dependent RNA helicase which is a subunit of the eIF4F complex involved in cap recognition and is required for mRNA binding to ribosome. In the current model of translation initiation, eIF4A unwinds RNA secondary structures in the 5'-UTR of mRNAs which is necessary to allow efficient binding of the small ribosomal subunit, and subsequent scanning for the initiator codon. This is ATP-dependent RNA helicase eIF4A (TIF1) from Debaryomyces hansenii (strain ATCC 36239 / CBS 767 / BCRC 21394 / JCM 1990 / NBRC 0083 / IGC 2968) (Yeast).